The following is a 423-amino-acid chain: Enolase (423 aa).

(2R)-2-phosphoglycerate is bound at residue glutamine 166. Glutamate 208 serves as the catalytic Proton donor. Aspartate 242, glutamate 283, and aspartate 310 together coordinate Mg(2+). (2R)-2-phosphoglycerate is bound by residues lysine 335, arginine 364, serine 365, and lysine 386. The active-site Proton acceptor is the lysine 335.

This sequence belongs to the enolase family. The cofactor is Mg(2+).

It localises to the cytoplasm. The protein localises to the secreted. It is found in the cell surface. It carries out the reaction (2R)-2-phosphoglycerate = phosphoenolpyruvate + H2O. It participates in carbohydrate degradation; glycolysis; pyruvate from D-glyceraldehyde 3-phosphate: step 4/5. Catalyzes the reversible conversion of 2-phosphoglycerate (2-PG) into phosphoenolpyruvate (PEP). It is essential for the degradation of carbohydrates via glycolysis. This is Enolase from Elusimicrobium minutum (strain Pei191).